Reading from the N-terminus, the 172-residue chain is C-phycocyanin beta chain (172 aa).

N72 carries the post-translational modification N4-methylasparagine. Residues C82 and C153 each contribute to the (2R,3E)-phycocyanobilin site.

Belongs to the phycobiliprotein family. As to quaternary structure, heterodimer of an alpha and a beta subunit, which further assembles into trimers and the trimers into hexamers. The basic functional unit of phycobiliproteins is a ring-shaped hexamer formed from two back-to-back trimers contacting via the alpha chain subunits. The trimers are composed of alpha/beta subunit heterodimers arranged around a three-fold axis of symmetry. The phycoerythrins also contain a gamma subunit which is located in the center of the hexamer. Post-translationally, contains two covalently linked bilin chromophores.

It is found in the plastid. The protein resides in the chloroplast thylakoid membrane. Its function is as follows. Light-harvesting photosynthetic bile pigment-protein from the phycobiliprotein complex (phycobilisome, PBS). Phycocyanin is the major phycobiliprotein in the PBS rod. In Rhodella violacea (Red alga), this protein is C-phycocyanin beta chain (cpcB).